A 312-amino-acid chain; its full sequence is 4-hydroxy-3-methylbut-2-enyl diphosphate reductase (312 aa).

Residue cysteine 15 participates in [4Fe-4S] cluster binding. (2E)-4-hydroxy-3-methylbut-2-enyl diphosphate is bound by residues histidine 44 and histidine 77. Residues histidine 44 and histidine 77 each contribute to the dimethylallyl diphosphate site. The isopentenyl diphosphate site is built by histidine 44 and histidine 77. Cysteine 99 contacts [4Fe-4S] cluster. Histidine 127 is a (2E)-4-hydroxy-3-methylbut-2-enyl diphosphate binding site. Histidine 127 lines the dimethylallyl diphosphate pocket. An isopentenyl diphosphate-binding site is contributed by histidine 127. Glutamate 129 (proton donor) is an active-site residue. Threonine 167 provides a ligand contact to (2E)-4-hydroxy-3-methylbut-2-enyl diphosphate. Cysteine 197 serves as a coordination point for [4Fe-4S] cluster. (2E)-4-hydroxy-3-methylbut-2-enyl diphosphate contacts are provided by serine 225, serine 226, asparagine 227, and serine 269. Dimethylallyl diphosphate-binding residues include serine 225, serine 226, asparagine 227, and serine 269. 4 residues coordinate isopentenyl diphosphate: serine 225, serine 226, asparagine 227, and serine 269.

Belongs to the IspH family. [4Fe-4S] cluster serves as cofactor.

It carries out the reaction isopentenyl diphosphate + 2 oxidized [2Fe-2S]-[ferredoxin] + H2O = (2E)-4-hydroxy-3-methylbut-2-enyl diphosphate + 2 reduced [2Fe-2S]-[ferredoxin] + 2 H(+). The catalysed reaction is dimethylallyl diphosphate + 2 oxidized [2Fe-2S]-[ferredoxin] + H2O = (2E)-4-hydroxy-3-methylbut-2-enyl diphosphate + 2 reduced [2Fe-2S]-[ferredoxin] + 2 H(+). Its pathway is isoprenoid biosynthesis; dimethylallyl diphosphate biosynthesis; dimethylallyl diphosphate from (2E)-4-hydroxy-3-methylbutenyl diphosphate: step 1/1. The protein operates within isoprenoid biosynthesis; isopentenyl diphosphate biosynthesis via DXP pathway; isopentenyl diphosphate from 1-deoxy-D-xylulose 5-phosphate: step 6/6. Its function is as follows. Catalyzes the conversion of 1-hydroxy-2-methyl-2-(E)-butenyl 4-diphosphate (HMBPP) into a mixture of isopentenyl diphosphate (IPP) and dimethylallyl diphosphate (DMAPP). Acts in the terminal step of the DOXP/MEP pathway for isoprenoid precursor biosynthesis. The protein is 4-hydroxy-3-methylbut-2-enyl diphosphate reductase of Azoarcus sp. (strain BH72).